A 433-amino-acid polypeptide reads, in one-letter code: UDP-N-acetylglucosamine 1-carboxyvinyltransferase (433 aa).

34–35 (KN) serves as a coordination point for phosphoenolpyruvate. Position 104 (arginine 104) interacts with UDP-N-acetyl-alpha-D-glucosamine. The active-site Proton donor is cysteine 128. 2-(S-cysteinyl)pyruvic acid O-phosphothioketal is present on cysteine 128. Aspartate 320 and isoleucine 342 together coordinate UDP-N-acetyl-alpha-D-glucosamine.

The protein belongs to the EPSP synthase family. MurA subfamily.

It is found in the cytoplasm. It carries out the reaction phosphoenolpyruvate + UDP-N-acetyl-alpha-D-glucosamine = UDP-N-acetyl-3-O-(1-carboxyvinyl)-alpha-D-glucosamine + phosphate. Its pathway is cell wall biogenesis; peptidoglycan biosynthesis. Cell wall formation. Adds enolpyruvyl to UDP-N-acetylglucosamine. The protein is UDP-N-acetylglucosamine 1-carboxyvinyltransferase of Synechococcus sp. (strain CC9605).